The chain runs to 102 residues: ATP-dependent Clp protease adapter protein ClpS (102 aa).

It belongs to the ClpS family. In terms of assembly, binds to the N-terminal domain of the chaperone ClpA.

In terms of biological role, involved in the modulation of the specificity of the ClpAP-mediated ATP-dependent protein degradation. This Shewanella denitrificans (strain OS217 / ATCC BAA-1090 / DSM 15013) protein is ATP-dependent Clp protease adapter protein ClpS.